A 230-amino-acid polypeptide reads, in one-letter code: Ubiquitin carboxyl-terminal hydrolase isozyme L3 (230 aa).

A UCH catalytic domain is found at 5-229 (RWLPLEANPE…LRFNAIALSA (225 aa)). Residues 8 to 13 (PLEANP) form an interaction with ubiquitin region. Catalysis depends on cysteine 95, which acts as the Nucleophile. Serine 130 carries the post-translational modification Phosphoserine. The tract at residues 152 to 159 (AHEGQTEA) is interaction with ubiquitin. Crossover loop which restricts access of large ubiquitin adducts to the active site. The Proton donor role is filled by histidine 169. An interaction with ubiquitin region spans residues 219–224 (ELRFNA).

Belongs to the peptidase C12 family. As to quaternary structure, preferentially binds diubiquitin; the interaction does not hydrolyze diubiquitin but, in vitro, inhibits the hydrolyzing activity on other substrates.

The protein resides in the cytoplasm. The catalysed reaction is Thiol-dependent hydrolysis of ester, thioester, amide, peptide and isopeptide bonds formed by the C-terminal Gly of ubiquitin (a 76-residue protein attached to proteins as an intracellular targeting signal).. Its activity is regulated as follows. Inhibited by monoubiquitin and diubiquitin. Its function is as follows. Deubiquitinating enzyme (DUB) that controls levels of cellular ubiquitin through processing of ubiquitin precursors and ubiquitinated proteins. Thiol protease that recognizes and hydrolyzes a peptide bond at the C-terminal glycine of either ubiquitin or NEDD8. Has a 10-fold preference for Arg and Lys at position P3, and exhibits a preference towards 'Lys-48'-linked ubiquitin chains. Deubiquitinates ENAC in apical compartments, thereby regulating apical membrane recycling. Indirectly increases the phosphorylation of IGFIR, AKT and FOXO1 and promotes insulin-signaling and insulin-induced adipogenesis. Required for stress-response retinal, skeletal muscle and germ cell maintenance. May be involved in working memory. Can hydrolyze UBB(+1), a mutated form of ubiquitin which is not effectively degraded by the proteasome. The sequence is that of Ubiquitin carboxyl-terminal hydrolase isozyme L3 (UCHL3) from Sus scrofa (Pig).